A 938-amino-acid chain; its full sequence is Protein NLP3 (938 aa).

2 disordered regions span residues 1 to 26 (MEVD…GGGD) and 557 to 597 (LADD…KAEK). The span at 12–26 (AGEGGGGGIGGGGGD) shows a compositional bias: gly residues. A compositionally biased stretch (basic and acidic residues) spans 580–597 (SLHKSNKPPERRRGKAEK). Residues 585 to 666 (NKPPERRRGK…IESVQGSDAA (82 aa)) form the RWP-RK domain. Positions 640-662 (SRKINKVNRSLSKLKQVIESVQG) form a coiled coil. The segment at 743–769 (DKASHSRSSSGEGSINSRTSEASCHGS) is disordered. Over residues 748–762 (SRSSSGEGSINSRTS) the composition is skewed to low complexity. A PB1 domain is found at 847-926 (TVTIKASFKE…HVIRLLVSDV (80 aa)).

The protein localises to the nucleus. Functionally, probable transcription factor. The chain is Protein NLP3 (NLP3) from Oryza sativa subsp. japonica (Rice).